Reading from the N-terminus, the 221-residue chain is Chaperone protein TorD (221 aa).

This sequence belongs to the TorD/DmsD family. TorD subfamily.

The protein localises to the cytoplasm. Functionally, involved in the biogenesis of TorA. Acts on TorA before the insertion of the molybdenum cofactor and, as a result, probably favors a conformation of the apoenzyme that is competent for acquiring the cofactor. This is Chaperone protein TorD from Shewanella pealeana (strain ATCC 700345 / ANG-SQ1).